Consider the following 331-residue polypeptide: Isopenicillin N synthase (331 aa).

Residues Arg87, Tyr91, Ser183, and Tyr189 each contribute to the isopenicillin N site. The N-[(5S)-5-amino-5-carboxypentanoyl]-L-cysteinyl-D-valine site is built by Arg87, Tyr91, Ser183, Tyr189, His214, and Asp216. The 113-residue stretch at Lys176–Leu288 folds into the Fe2OG dioxygenase domain. Positions 214, 216, and 270 each coordinate Fe(2+). Residue Arg279 participates in 2-oxoglutarate binding. Ser281 contributes to the isopenicillin N binding site. N-[(5S)-5-amino-5-carboxypentanoyl]-L-cysteinyl-D-valine is bound at residue Ser281.

Belongs to the iron/ascorbate-dependent oxidoreductase family. As to quaternary structure, monomer. The cofactor is Fe(2+).

It is found in the cytoplasm. The protein resides in the cytosol. It catalyses the reaction N-[(5S)-5-amino-5-carboxypentanoyl]-L-cysteinyl-D-valine + O2 = isopenicillin N + 2 H2O. Its pathway is antibiotic biosynthesis; penicillin G biosynthesis; penicillin G from L-alpha-aminoadipate and L-cysteine and L-valine: step 2/3. Isopenicillin N synthase; part of the gene cluster that mediates the biosynthesis of penicillin, the world's most important antibiotic. IpnA catalyzes the cyclization of the tripeptide N-[(5S)-5-amino-5-carboxypentanoyl]-L-cysteinyl-D-valine (LLD-ACV or ACV) to form isopenicillin N (IPN) that contains the beta-lactam nucleus. The penicillin biosynthesis occurs via 3 enzymatic steps, the first corresponding to the production of the tripeptide N-[(5S)-5-amino-5-carboxypentanoyl]-L-cysteinyl-D-valine (LLD-ACV or ACV) by the NRPS acvA. The tripeptide ACV is then cyclized to isopenicillin N (IPN) by the isopenicillin N synthase ipnA that forms the beta-lactam nucleus. Finally, the alpha-aminoadipyl side chain is exchanged for phenylacetic acid by the isopenicillin N acyltransferase penDE to yield penicillin in the peroxisomal matrix. The sequence is that of Isopenicillin N synthase from Emericella nidulans (strain FGSC A4 / ATCC 38163 / CBS 112.46 / NRRL 194 / M139) (Aspergillus nidulans).